The primary structure comprises 146 residues: Probable transporter XF_0765 (146 aa).

Helical transmembrane passes span 9 to 29 (FTVA…SEMI), 46 to 66 (NPSL…GMAL), 91 to 111 (IVFG…CPGP), and 116 to 136 (LSTG…GMII).

This sequence belongs to the TsuA/YedE (TC 9.B.102) family.

The protein resides in the cell inner membrane. This Xylella fastidiosa (strain 9a5c) protein is Probable transporter XF_0765.